Here is a 313-residue protein sequence, read N- to C-terminus: 4-hydroxy-3-methylbut-2-enyl diphosphate reductase (313 aa).

Cys-12 lines the [4Fe-4S] cluster pocket. (2E)-4-hydroxy-3-methylbut-2-enyl diphosphate-binding residues include His-41 and His-74. Residues His-41 and His-74 each contribute to the dimethylallyl diphosphate site. Isopentenyl diphosphate contacts are provided by His-41 and His-74. Cys-96 is a [4Fe-4S] cluster binding site. Residue His-124 participates in (2E)-4-hydroxy-3-methylbut-2-enyl diphosphate binding. His-124 contacts dimethylallyl diphosphate. His-124 contributes to the isopentenyl diphosphate binding site. The active-site Proton donor is the Glu-126. (2E)-4-hydroxy-3-methylbut-2-enyl diphosphate is bound at residue Thr-167. Cys-197 provides a ligand contact to [4Fe-4S] cluster. (2E)-4-hydroxy-3-methylbut-2-enyl diphosphate is bound by residues Ser-225, Ser-226, Asn-227, and Ser-269. Residues Ser-225, Ser-226, Asn-227, and Ser-269 each coordinate dimethylallyl diphosphate. Residues Ser-225, Ser-226, Asn-227, and Ser-269 each contribute to the isopentenyl diphosphate site.

Belongs to the IspH family. The cofactor is [4Fe-4S] cluster.

The catalysed reaction is isopentenyl diphosphate + 2 oxidized [2Fe-2S]-[ferredoxin] + H2O = (2E)-4-hydroxy-3-methylbut-2-enyl diphosphate + 2 reduced [2Fe-2S]-[ferredoxin] + 2 H(+). It catalyses the reaction dimethylallyl diphosphate + 2 oxidized [2Fe-2S]-[ferredoxin] + H2O = (2E)-4-hydroxy-3-methylbut-2-enyl diphosphate + 2 reduced [2Fe-2S]-[ferredoxin] + 2 H(+). Its pathway is isoprenoid biosynthesis; dimethylallyl diphosphate biosynthesis; dimethylallyl diphosphate from (2E)-4-hydroxy-3-methylbutenyl diphosphate: step 1/1. It functions in the pathway isoprenoid biosynthesis; isopentenyl diphosphate biosynthesis via DXP pathway; isopentenyl diphosphate from 1-deoxy-D-xylulose 5-phosphate: step 6/6. Functionally, catalyzes the conversion of 1-hydroxy-2-methyl-2-(E)-butenyl 4-diphosphate (HMBPP) into a mixture of isopentenyl diphosphate (IPP) and dimethylallyl diphosphate (DMAPP). Acts in the terminal step of the DOXP/MEP pathway for isoprenoid precursor biosynthesis. This Baumannia cicadellinicola subsp. Homalodisca coagulata protein is 4-hydroxy-3-methylbut-2-enyl diphosphate reductase.